The chain runs to 388 residues: Dauer abnormal formation protein 25 (388 aa).

3 ANK repeats span residues 40–69, 74–103, and 107–137; these read SGMS…DVND, TLYT…RMYL, and IGKT…DVIE. Zn(2+) contacts are provided by cysteine 321, cysteine 324, cysteine 333, cysteine 336, cysteine 341, cysteine 345, histidine 353, and cysteine 357. Residues 321 to 357 form an MYND-type zinc finger; sequence CSVCGHPGAKKRCTQCKLAYCSQECQKFDWPIHKKVC.

Expressed in many ciliated sensory neurons.

It localises to the cell projection. The protein resides in the cilium. Its function is as follows. May be involved in the trafficking and dendritic transport of signaling proteins, such as the receptor-type guanylate cyclases gcy-12 and daf-11, to the cilia. In ciliated sensory neurons, required for the calcium flux to the cytoplasm in response to onset and removal of a nitric oxide (NO) stimulus and is thereby required for the behavioral avoidance response to NO-producing organisms like P.aeruginosa. In Caenorhabditis elegans, this protein is Dauer abnormal formation protein 25 (daf-25).